Consider the following 98-residue polypeptide: NADH-ubiquinone oxidoreductase chain 4L (98 aa).

3 helical membrane passes run 1 to 21, 29 to 49, and 58 to 78; these read MPII…GMLI, SLLC…LMAL, and IVPI…LALL.

The protein belongs to the complex I subunit 4L family. Core subunit of respiratory chain NADH dehydrogenase (Complex I) which is composed of 45 different subunits.

The protein resides in the mitochondrion inner membrane. It carries out the reaction a ubiquinone + NADH + 5 H(+)(in) = a ubiquinol + NAD(+) + 4 H(+)(out). Core subunit of the mitochondrial membrane respiratory chain NADH dehydrogenase (Complex I) which catalyzes electron transfer from NADH through the respiratory chain, using ubiquinone as an electron acceptor. Part of the enzyme membrane arm which is embedded in the lipid bilayer and involved in proton translocation. The sequence is that of NADH-ubiquinone oxidoreductase chain 4L (MT-ND4L) from Nasalis larvatus (Proboscis monkey).